We begin with the raw amino-acid sequence, 179 residues long: Large ribosomal subunit protein bL9 (179 aa).

The segment at 156-179 is disordered; it reads PEGAPVPVAEEPAAEAEQAEVAAE. Residues 157 to 166 are compositionally biased toward low complexity; the sequence is EGAPVPVAEE. Residues 167–179 show a composition bias toward acidic residues; sequence PAAEAEQAEVAAE.

It belongs to the bacterial ribosomal protein bL9 family.

Its function is as follows. Binds to the 23S rRNA. The sequence is that of Large ribosomal subunit protein bL9 from Porphyromonas gingivalis (strain ATCC 33277 / DSM 20709 / CIP 103683 / JCM 12257 / NCTC 11834 / 2561).